Here is a 353-residue protein sequence, read N- to C-terminus: Iron(III) enterobactin esterase (353 aa).

The protein belongs to the Fes family.

Its subcellular location is the cytoplasm. The catalysed reaction is Fe(III)-enterobactin + 3 H2O + H(+) = Fe(III)-[N-(2,3-dihydroxybenzoyl)-L-serine] + 2 N-(2,3-dihydroxybenzoyl)-L-serine. It carries out the reaction Fe(III)-enterobactin + H2O = Fe(III)-[N-(2,3-dihydroxybenzoyl)-L-serine]3 + H(+). It catalyses the reaction Fe(III)-[N-(2,3-dihydroxybenzoyl)-L-serine]3 + H2O + H(+) = Fe(III)-[N-(2,3-dihydroxybenzoyl)-L-serine]2 + N-(2,3-dihydroxybenzoyl)-L-serine. The enzyme catalyses Fe(III)-[N-(2,3-dihydroxybenzoyl)-L-serine]2 + H2O + H(+) = Fe(III)-[N-(2,3-dihydroxybenzoyl)-L-serine] + N-(2,3-dihydroxybenzoyl)-L-serine. Functionally, catalyzes the hydrolysis of ferric enterobactin (Fe-Ent). Is responsible for the release of iron from ferric enterobactin. The sequence is that of Iron(III) enterobactin esterase from Yersinia enterocolitica.